A 367-amino-acid polypeptide reads, in one-letter code: Ribosomal lysine N-methyltransferase 5 (367 aa).

The segment at 55–74 is disordered; sequence EGGRKKKRVRRRNKASSVEE. Basic residues predominate over residues 58-68; it reads RKKKRVRRRNK. S-adenosyl-L-methionine contacts are provided by residues Trp-110, 170–172, Asp-192, Trp-256, and Met-288; that span reads GAG.

The protein belongs to the class I-like SAM-binding methyltransferase superfamily. RKM5 family.

In terms of biological role, S-adenosyl-L-methionine-dependent protein-lysine N-methyltransferase that monomethylates 60S ribosomal protein L1 (RPL1A and RPL1B) at 'Lys-46'. The sequence is that of Ribosomal lysine N-methyltransferase 5 (RKM5) from Saccharomyces cerevisiae (strain RM11-1a) (Baker's yeast).